We begin with the raw amino-acid sequence, 188 residues long: Putative pre-16S rRNA nuclease (188 aa).

Residues 156–188 are disordered; that stretch reads LRQGDAAPGGSDDERDEDGDTDGEDGGGDGGGE. Residues 166-188 show a composition bias toward acidic residues; that stretch reads SDDERDEDGDTDGEDGGGDGGGE.

The protein belongs to the YqgF nuclease family.

Its subcellular location is the cytoplasm. Its function is as follows. Could be a nuclease involved in processing of the 5'-end of pre-16S rRNA. This Rhodospirillum centenum (strain ATCC 51521 / SW) protein is Putative pre-16S rRNA nuclease.